We begin with the raw amino-acid sequence, 280 residues long: Feruloyl esterase 1 (280 aa).

An N-terminal signal peptide occupies residues 1–20 (MKAFATRALAFSVAAGQALA). 3 disulfides stabilise this stretch: C49–C278, C111–C114, and C247–C254. N99 carries an N-linked (GlcNAc...) asparagine glycan. The Nucleophile role is filled by S153. D214 functions as the Charge relay system in the catalytic mechanism. The Charge relay system role is filled by H267.

The protein belongs to the AB hydrolase superfamily. FaeA family. In terms of processing, glycosylated.

It is found in the secreted. The catalysed reaction is feruloyl-polysaccharide + H2O = ferulate + polysaccharide.. Metal or basic ions Mn(2+), Ni(+), Mg(2+), and NH(4)(+) decrease the activity by 4.4% to 14.1%. The enzymatic activity is inhibited by Zn(2+) at a low concentration (1 mM) but not a high concentration (5 mM). Loses about a quarter of activity by the addition of 1 mM of Cu(2+) or Fe(3+) and activity is completely suppressed when the concentration was up to 5 mM. Low concentrations (0.25 and 0.5 M) of NaCl improve the activity by 5.6 % or 8.3%, respectively. In terms of biological role, involved in degradation of plant cell walls. Hydrolyzes the feruloyl-arabinose ester bond in arabinoxylans, and the feruloyl-galactose ester bond in pectin. This Penicillium parvum (Eupenicillium parvum) protein is Feruloyl esterase 1.